A 376-amino-acid chain; its full sequence is c-di-GMP synthase (376 aa).

The protein belongs to the CD-NTase family. G05 subfamily.

The enzyme catalyses 2 GTP = 3',3'-c-di-GMP + 2 diphosphate. In terms of biological role, cyclic nucleotide synthase (second messenger synthase) of a CBASS antivirus system. CBASS (cyclic oligonucleotide-based antiphage signaling system) provides immunity against bacteriophage. The CD-NTase protein synthesizes cyclic nucleotides in response to infection; these serve as specific second messenger signals. The signals activate a diverse range of effectors, leading to bacterial cell death and thus abortive phage infection. A type I-D CBASS(GG) system. Its function is as follows. Cyclic dinucleotide synthase that catalyzes the synthesis of c-di-GMP, has no activity with other NTP substrates. This chain is c-di-GMP synthase, found in Roseivirga ehrenbergii (strain DSM 102268 / JCM 13514 / KCTC 12282 / NCIMB 14502 / KMM 6017).